Consider the following 477-residue polypeptide: tRNA-2-methylthio-N(6)-dimethylallyladenosine synthase (477 aa).

One can recognise an MTTase N-terminal domain in the interval 3 to 120; sequence KKLHIKTWGC…LPTMIKQVQE (118 aa). [4Fe-4S] cluster is bound by residues Cys-12, Cys-49, Cys-83, Cys-157, Cys-161, and Cys-164. The 233-residue stretch at 143 to 375 folds into the Radical SAM core domain; sequence RAEGATAFVS…QHVINNQSMQ (233 aa). The region spanning 378–441 is the TRAM domain; the sequence is RAMLGSTQRI…PNSLRGKFLR (64 aa).

This sequence belongs to the methylthiotransferase family. MiaB subfamily. In terms of assembly, monomer. Requires [4Fe-4S] cluster as cofactor.

Its subcellular location is the cytoplasm. The enzyme catalyses N(6)-dimethylallyladenosine(37) in tRNA + (sulfur carrier)-SH + AH2 + 2 S-adenosyl-L-methionine = 2-methylsulfanyl-N(6)-dimethylallyladenosine(37) in tRNA + (sulfur carrier)-H + 5'-deoxyadenosine + L-methionine + A + S-adenosyl-L-homocysteine + 2 H(+). Catalyzes the methylthiolation of N6-(dimethylallyl)adenosine (i(6)A), leading to the formation of 2-methylthio-N6-(dimethylallyl)adenosine (ms(2)i(6)A) at position 37 in tRNAs that read codons beginning with uridine. The polypeptide is tRNA-2-methylthio-N(6)-dimethylallyladenosine synthase (Aeromonas hydrophila subsp. hydrophila (strain ATCC 7966 / DSM 30187 / BCRC 13018 / CCUG 14551 / JCM 1027 / KCTC 2358 / NCIMB 9240 / NCTC 8049)).